Consider the following 190-residue polypeptide: Shikimate kinase (190 aa).

Glycine 22 to threonine 27 contributes to the ATP binding site. Serine 26 provides a ligand contact to Mg(2+). Positions 44, 68, and 90 each coordinate substrate. Arginine 127 provides a ligand contact to ATP. Residue arginine 146 coordinates substrate.

It belongs to the shikimate kinase family. Monomer. Mg(2+) serves as cofactor.

Its subcellular location is the cytoplasm. It catalyses the reaction shikimate + ATP = 3-phosphoshikimate + ADP + H(+). The protein operates within metabolic intermediate biosynthesis; chorismate biosynthesis; chorismate from D-erythrose 4-phosphate and phosphoenolpyruvate: step 5/7. In terms of biological role, catalyzes the specific phosphorylation of the 3-hydroxyl group of shikimic acid using ATP as a cosubstrate. The protein is Shikimate kinase of Microcystis aeruginosa (strain NIES-843 / IAM M-2473).